We begin with the raw amino-acid sequence, 357 residues long: Probable 3'(2'),5'-bisphosphate nucleotidase 3 (357 aa).

Residue Asp-46 is the Proton acceptor of the active site. Residues Glu-71, Asp-135, and Ile-137 each contribute to the Mg(2+) site. The active-site Proton acceptor is Thr-140. Adenosine 3',5'-bisphosphate-binding residues include Thr-140, Ser-256, Lys-259, and Arg-273. AMP contacts are provided by Ser-256, Lys-259, and Arg-273.

It belongs to the inositol monophosphatase superfamily. It depends on Mg(2+) as a cofactor.

The catalysed reaction is 3'-phosphoadenylyl sulfate + H2O = adenosine 5'-phosphosulfate + phosphate. The enzyme catalyses adenosine 3',5'-bisphosphate + H2O = AMP + phosphate. It carries out the reaction adenosine 2',5'-bisphosphate + H2O = AMP + phosphate. It catalyses the reaction 1D-myo-inositol 1,4-bisphosphate + H2O = 1D-myo-inositol 4-phosphate + phosphate. The catalysed reaction is 1D-myo-inositol 1,3,4-trisphosphate + H2O = 1D-myo-inositol 3,4-bisphosphate + phosphate. It functions in the pathway signal transduction; phosphatidylinositol signaling pathway. Its function is as follows. Phosphatase that converts adenosine 3'-phosphate 5'-phosphosulfate (PAPS) to adenosine 5'-phosphosulfate (APS) and 3'(2')-phosphoadenosine 5'-phosphate (PAP) to AMP. Is also able to hydrolyze inositol 1,4-bisphosphate and inositol 1,3,4-trisphosphate. This Arabidopsis thaliana (Mouse-ear cress) protein is Probable 3'(2'),5'-bisphosphate nucleotidase 3 (SAL3).